Here is a 513-residue protein sequence, read N- to C-terminus: Cytochrome P450 monooxygenase orf3 (513 aa).

Residues 11–31 (LVALGLIAATIIIYSFTLTVY) traverse the membrane as a helical segment. N-linked (GlcNAc...) asparagine glycans are attached at residues N211 and N351. C455 contributes to the heme binding site.

Belongs to the cytochrome P450 family. Heme is required as a cofactor.

The protein localises to the membrane. The protein operates within mycotoxin biosynthesis. In terms of biological role, cytochrome P450 monooxygenase; part of the gene cluster that mediates the biosynthesis of brefeldin A (BFA), a protein transport inhibitor that shows antiviral, antifungal, and antitumor properties. The proposed biosynthesis of BFA involves formation of an acyclic polyketide chain that is differentially tailored throughout the backbone. The highly reducing polyketide synthase Bref-PKS is proposed to synthesize the precisely reduced octaketide precursor, which could then be directly offloaded by the thiohydrolase enzyme Bref-TH followed by a cytochrome P450 monooxygenase-mediated formation of the cyclopentane ring and macrocyclization to afford 7-deoxy BFA. Alternatively, the first ring annulation can also occur on the ACP-tethered intermediate before the thiohydrolase release and lactonization. The C7-hydroxylation by another cytochrome P450 monooxygenase is believed to be the final step in the process to obtain the final structure of BFA. In addition to the HRPKS Bref-PKS and the thiohydrolase Bref-TH, the brefeldin A biosynthesis cluster contains 4 cytochrome p450 monooxygenases (called orf3 to orf6), as well a the probable cluster-specific transcription regulator orf8. In Eupenicillium brefeldianum (Penicillium brefeldianum), this protein is Cytochrome P450 monooxygenase orf3.